A 99-amino-acid chain; its full sequence is Pterin-4-alpha-carbinolamine dehydratase (99 aa).

This sequence belongs to the pterin-4-alpha-carbinolamine dehydratase family.

It carries out the reaction (4aS,6R)-4a-hydroxy-L-erythro-5,6,7,8-tetrahydrobiopterin = (6R)-L-erythro-6,7-dihydrobiopterin + H2O. Functionally, involved in tetrahydrobiopterin biosynthesis. This chain is Pterin-4-alpha-carbinolamine dehydratase (pcbd), found in Dictyostelium discoideum (Social amoeba).